Reading from the N-terminus, the 975-residue chain is Glycine dehydrogenase (decarboxylating) (975 aa).

Lys-723 carries the post-translational modification N6-(pyridoxal phosphate)lysine.

This sequence belongs to the GcvP family. As to quaternary structure, the glycine cleavage system is composed of four proteins: P, T, L and H. The cofactor is pyridoxal 5'-phosphate.

The enzyme catalyses N(6)-[(R)-lipoyl]-L-lysyl-[glycine-cleavage complex H protein] + glycine + H(+) = N(6)-[(R)-S(8)-aminomethyldihydrolipoyl]-L-lysyl-[glycine-cleavage complex H protein] + CO2. In terms of biological role, the glycine cleavage system catalyzes the degradation of glycine. The P protein binds the alpha-amino group of glycine through its pyridoxal phosphate cofactor; CO(2) is released and the remaining methylamine moiety is then transferred to the lipoamide cofactor of the H protein. This chain is Glycine dehydrogenase (decarboxylating), found in Burkholderia pseudomallei (strain 668).